Reading from the N-terminus, the 236-residue chain is Probable pseudouridine-5'-phosphatase YKL033W-A (236 aa).

The protein belongs to the HAD-like hydrolase superfamily.

It catalyses the reaction XMP + H2O = xanthosine + phosphate. The enzyme catalyses psi-UMP + H2O = pseudouridine + phosphate. Nucleotidase with XMP as the best in vitro substrate. Low catalytic efficiencies of YKL033W-A observed with XMP and other substrates suggest that these could be secondary activities for this protein, and its primary substrate is not yet identified. May possess pseudouridine 5'-phosphatase activity and together with dTTP/UTP pyrophosphatase YOR111W might constitute a pathway for the detoxification of pseudouridine 5'-triphosphate (Psi-UTP) and -monophosphate (Psi-UMP). The sequence is that of Probable pseudouridine-5'-phosphatase YKL033W-A from Saccharomyces cerevisiae (strain ATCC 204508 / S288c) (Baker's yeast).